We begin with the raw amino-acid sequence, 190 residues long: ATP synthase subunit delta (190 aa).

It belongs to the ATPase delta chain family. As to quaternary structure, F-type ATPases have 2 components, F(1) - the catalytic core - and F(0) - the membrane proton channel. F(1) has five subunits: alpha(3), beta(3), gamma(1), delta(1), epsilon(1). F(0) has three main subunits: a(1), b(2) and c(10-14). The alpha and beta chains form an alternating ring which encloses part of the gamma chain. F(1) is attached to F(0) by a central stalk formed by the gamma and epsilon chains, while a peripheral stalk is formed by the delta and b chains.

It localises to the cell inner membrane. Functionally, f(1)F(0) ATP synthase produces ATP from ADP in the presence of a proton or sodium gradient. F-type ATPases consist of two structural domains, F(1) containing the extramembraneous catalytic core and F(0) containing the membrane proton channel, linked together by a central stalk and a peripheral stalk. During catalysis, ATP synthesis in the catalytic domain of F(1) is coupled via a rotary mechanism of the central stalk subunits to proton translocation. This protein is part of the stalk that links CF(0) to CF(1). It either transmits conformational changes from CF(0) to CF(1) or is implicated in proton conduction. The chain is ATP synthase subunit delta from Petrotoga mobilis (strain DSM 10674 / SJ95).